The following is a 247-amino-acid chain: MSALPIATNRYFDNHFERPGVKLLPNEFYTTAEDMVLMTVLGSCVAACLHDPYAGIGGMNHFMLPDDGADPGAAASESMRYGAYAMEVLINELIKAGGRRERFEAKVFGGAAVLAGMTTINIGDRNADFVRRYLALERIRITAEDLQGVHPRKVAFMPHSGRAMVKKLRLQVPGVTEREAALAREADRLRAARTRAQVELFAAKRPAAPQPARPRIELFGGRGTTPGAGSQAAGSPYAANLSRKQEA.

The tract at residues 204–247 (KRPAAPQPARPRIELFGGRGTTPGAGSQAAGSPYAANLSRKQEA) is disordered.

The protein belongs to the CheD family.

The enzyme catalyses L-glutaminyl-[protein] + H2O = L-glutamyl-[protein] + NH4(+). Functionally, probably deamidates glutamine residues to glutamate on methyl-accepting chemotaxis receptors (MCPs), playing an important role in chemotaxis. The chain is Probable chemoreceptor glutamine deamidase CheD from Burkholderia orbicola (strain MC0-3).